The primary structure comprises 191 residues: Probable GTP-binding protein EngB (191 aa).

The EngB-type G domain maps to 19-188 (NIPEICFMGR…HKKIFELFVE (170 aa)). GTP is bound by residues 27–34 (GRSNVGKS), 53–57 (GRTQL), 70–73 (DLPG), 136–139 (NKFD), and 167–169 (AST). Positions 34 and 55 each coordinate Mg(2+).

It belongs to the TRAFAC class TrmE-Era-EngA-EngB-Septin-like GTPase superfamily. EngB GTPase family. It depends on Mg(2+) as a cofactor.

Necessary for normal cell division and for the maintenance of normal septation. The sequence is that of Probable GTP-binding protein EngB from Mycoplasma genitalium (strain ATCC 33530 / DSM 19775 / NCTC 10195 / G37) (Mycoplasmoides genitalium).